We begin with the raw amino-acid sequence, 712 residues long: Osmolarity two-component system protein SSK1 (712 aa).

A disordered region spans residues 73-114 (ADNTSSNNTNDNSCRSKSNGAGSGANLSVNSNTKSSVSPTAG). A compositionally biased stretch (low complexity) spans 74-85 (DNTSSNNTNDNS). A compositionally biased stretch (polar residues) spans 87–113 (RSKSNGAGSGANLSVNSNTKSSVSPTA). Phosphoserine is present on residues Ser-110, Ser-195, Ser-327, Ser-351, Ser-368, and Ser-380. The tract at residues 340–362 (KADLKGKDGNSSPQEFKLITDEE) is disordered. A disordered region spans residues 448 to 468 (EVQRRKEDVTPASPILTSSQT). The Response regulatory domain occupies 505–647 (NVLIVEDNVI…WLSKKITEWG (143 aa)). The residue at position 554 (Asp-554) is a 4-aspartylphosphate. The disordered stretch occupies residues 672–712 (KSPQKPIAPSNPHSFKQATSMTPTHSPVRKNSNLSPTQIEL). Ser-673 carries the post-translational modification Phosphoserine. Positions 682–712 (NPHSFKQATSMTPTHSPVRKNSNLSPTQIEL) are enriched in polar residues. A Phosphothreonine modification is found at Thr-693. Ser-703 and Ser-706 each carry phosphoserine.

The protein belongs to the SSK1 family. As to quaternary structure, interacts with SSK2, SSK22 and YPD1. Post-translationally, the phosphorelay mechanism involves the sequential transfer of a phosphate group from 'His-576' (H1) to 'Asp-1144' (D1) of SLN1, then to 'His-64' (H2) of YPD1 and finally to Asp-554 (D2) of SSK1.

The protein resides in the cytoplasm. Final receptor of the SLN1-YPD1-SSK1 two-component regulatory system, which controls activity of the HOG1 pathway in response to changes in the osmolarity of the extracellular environment. Under normal osmotic conditions, maintained in a phosphorylated and inactive state by the phosphorelay intermediate protein YPD1. Under conditions of high osmolarity, the histidine kinase SLN1 is no longer active and the unphosphorylated form of SSK1 interacts with and activates SSK2 and SSK22, two MAPKKKs that further stimulate the PBS2-HOG1 MAPKK-MAPK cascade. Unphosphorylated SSK1 is subsequently degraded by the UBC7-dependent ubiquitin-proteasome system to down-regulate the HOG1 pathway after completion of the osmotic adaptation. The polypeptide is Osmolarity two-component system protein SSK1 (Saccharomyces cerevisiae (strain ATCC 204508 / S288c) (Baker's yeast)).